We begin with the raw amino-acid sequence, 67 residues long: DNA-directed RNA polymerase subunit omega (67 aa).

Belongs to the RNA polymerase subunit omega family. The RNAP catalytic core consists of 2 alpha, 1 beta, 1 beta' and 1 omega subunit. When a sigma factor is associated with the core the holoenzyme is formed, which can initiate transcription.

The catalysed reaction is RNA(n) + a ribonucleoside 5'-triphosphate = RNA(n+1) + diphosphate. Promotes RNA polymerase assembly. Latches the N- and C-terminal regions of the beta' subunit thereby facilitating its interaction with the beta and alpha subunits. The sequence is that of DNA-directed RNA polymerase subunit omega from Bacillus velezensis (strain DSM 23117 / BGSC 10A6 / LMG 26770 / FZB42) (Bacillus amyloliquefaciens subsp. plantarum).